The following is a 301-amino-acid chain: Structure-specific endonuclease subunit SLX1 (301 aa).

Residues 12 to 95 (AFYCCYLLRS…QHPYQTRFIK (84 aa)) form the GIY-YIG domain. An SLX1-type zinc finger spans residues 216–283 (CAICEKIVDY…IPTSGQCPNC (68 aa)).

Belongs to the SLX1 family. Forms a heterodimer with SLX4. A divalent metal cation is required as a cofactor.

It localises to the nucleus. Functionally, catalytic subunit of the SLX1-SLX4 structure-specific endonuclease that resolves DNA secondary structures generated during DNA repair and recombination. Has endonuclease activity towards branched DNA substrates, introducing single-strand cuts in duplex DNA close to junctions with ss-DNA. This Eremothecium gossypii (strain ATCC 10895 / CBS 109.51 / FGSC 9923 / NRRL Y-1056) (Yeast) protein is Structure-specific endonuclease subunit SLX1.